The chain runs to 93 residues: MATRLSDAEIEERLGDLTGWTRQGNEIRKTFQLPSFPSAIAFVVNVAFLAEAAGHHPDIDIRWRKVTLSLTTHDAGGLTQKDFDLATQIDEIM.

This sequence belongs to the pterin-4-alpha-carbinolamine dehydratase family.

It catalyses the reaction (4aS,6R)-4a-hydroxy-L-erythro-5,6,7,8-tetrahydrobiopterin = (6R)-L-erythro-6,7-dihydrobiopterin + H2O. The chain is Putative pterin-4-alpha-carbinolamine dehydratase from Roseiflexus sp. (strain RS-1).